A 389-amino-acid polypeptide reads, in one-letter code: MTNQTQLSSKTYDTHFAKLTAEQLAENAKKKVIIGMSGGVDSSVSAFILQQQGYQVEGLFMKNWEEDDDTDYCTAAADLADAQAVADKLGMKLHKINFAAEYWDNVFEHFLNEYKAGRTPNPDILCNKEIKFKAFLEYAAEDLGADYIATGHYVRRSGDDNNAQLLRGLDANKDQSYFLYTLSHKQVGQSLFPVGDIEKPIVRQIAEDLGLATAKKKDSTGICFIGERKFKDFLARYLPAQPGEIRTVDGKVVGRHDGLMYHTLGQRKGLGIGGVKGLSEDPFYVVEKDLINNVLVVAQGHDNSALLSSGLIATQLHWVDRQPIRENLRCTVKTRYRQTDIACEIQPIDDDTIRVIFDEPQIAVTPGQSAVFYQGDVCLGGGVIEEQLK.

ATP contacts are provided by residues 35–42 and M61; that span reads GMSGGVDS. Residues 121 to 123 are interaction with target base in tRNA; the sequence is NPD. C126 functions as the Nucleophile in the catalytic mechanism. A disulfide bond links C126 and C223. G151 lines the ATP pocket. Residues 173–175 form an interaction with tRNA region; it reads KDQ. The Cysteine persulfide intermediate role is filled by C223. An interaction with tRNA region spans residues 335 to 336; the sequence is RY.

This sequence belongs to the MnmA/TRMU family.

It is found in the cytoplasm. It catalyses the reaction S-sulfanyl-L-cysteinyl-[protein] + uridine(34) in tRNA + AH2 + ATP = 2-thiouridine(34) in tRNA + L-cysteinyl-[protein] + A + AMP + diphosphate + H(+). Catalyzes the 2-thiolation of uridine at the wobble position (U34) of tRNA, leading to the formation of s(2)U34. The sequence is that of tRNA-specific 2-thiouridylase MnmA from Actinobacillus pleuropneumoniae serotype 3 (strain JL03).